Consider the following 300-residue polypeptide: GTPase Era (300 aa).

In terms of domain architecture, Era-type G spans arginine 8–glutamate 176. Positions glycine 16–serine 23 are G1. Glycine 16–serine 23 serves as a coordination point for GTP. Residues glutamine 42–histidine 46 form a G2 region. The interval aspartate 63–glycine 66 is G3. GTP-binding positions include aspartate 63–methionine 67 and asparagine 125–aspartate 128. The tract at residues asparagine 125–aspartate 128 is G4. The segment at isoleucine 155 to alanine 157 is G5. Residues valine 199 to glycine 283 form the KH type-2 domain.

The protein belongs to the TRAFAC class TrmE-Era-EngA-EngB-Septin-like GTPase superfamily. Era GTPase family. As to quaternary structure, monomer.

The protein resides in the cytoplasm. Its subcellular location is the cell inner membrane. An essential GTPase that binds both GDP and GTP, with rapid nucleotide exchange. Plays a role in 16S rRNA processing and 30S ribosomal subunit biogenesis and possibly also in cell cycle regulation and energy metabolism. The chain is GTPase Era from Pseudomonas fluorescens (strain Pf0-1).